We begin with the raw amino-acid sequence, 509 residues long: UDP-N-acetylmuramyl-tripeptide synthetase (509 aa).

Ser30 contributes to the UDP-N-acetyl-alpha-D-muramoyl-L-alanyl-D-glutamate binding site. 111-117 (GTDGKTT) provides a ligand contact to ATP. Residues 155-156 (ST), Thr182, and Arg192 each bind UDP-N-acetyl-alpha-D-muramoyl-L-alanyl-D-glutamate. Lys224 carries the N6-carboxylysine modification.

Belongs to the MurCDEF family. MurE subfamily. Post-translationally, carboxylation is probably crucial for Mg(2+) binding and, consequently, for the gamma-phosphate positioning of ATP.

Its subcellular location is the cytoplasm. The protein operates within cell wall biogenesis; peptidoglycan biosynthesis. Catalyzes the addition of an amino acid to the nucleotide precursor UDP-N-acetylmuramoyl-L-alanyl-D-glutamate (UMAG) in the biosynthesis of bacterial cell-wall peptidoglycan. This Roseiflexus sp. (strain RS-1) protein is UDP-N-acetylmuramyl-tripeptide synthetase.